Consider the following 251-residue polypeptide: GTP cyclohydrolase 1 type 2 homolog (251 aa).

His64, His65, Asp102, His219, and Glu223 together coordinate a divalent metal cation.

This sequence belongs to the GTP cyclohydrolase I type 2/NIF3 family. In terms of assembly, homohexamer.

The protein is GTP cyclohydrolase 1 type 2 homolog of Chlamydia trachomatis serovar D (strain ATCC VR-885 / DSM 19411 / UW-3/Cx).